The following is a 102-amino-acid chain: MQKARIRLSGTNPATLDEICNQVRGIAQRTGVHMAGPIPLPTKRLVVPCRKSPDGEGSATWDHWEMRVHKRLIDLDADERALRQLMRIQVPKNVNIEIVLES.

This sequence belongs to the universal ribosomal protein uS10 family. As to quaternary structure, part of the 30S ribosomal subunit.

In terms of biological role, involved in the binding of tRNA to the ribosomes. In Methanothrix thermoacetophila (strain DSM 6194 / JCM 14653 / NBRC 101360 / PT) (Methanosaeta thermophila), this protein is Small ribosomal subunit protein uS10.